A 159-amino-acid polypeptide reads, in one-letter code: Probable RNA-binding protein EIF1AD (159 aa).

In terms of domain architecture, S1-like spans Met18–Thr93. Positions Lys109–Asp159 are disordered. The segment covering Ser146 to Asp159 has biased composition (acidic residues).

The protein belongs to the EIF1AD family.

The sequence is that of Probable RNA-binding protein EIF1AD from Drosophila melanogaster (Fruit fly).